Here is a 398-residue protein sequence, read N- to C-terminus: Elongation factor Tu (398 aa).

Positions 10 to 208 constitute a tr-type G domain; the sequence is KPHVNVGTIG…ALDDYIPEPE (199 aa). The interval 19–26 is G1; the sequence is GHVDHGKT. Residue 19–26 participates in GTP binding; sequence GHVDHGKT. Residue Thr26 coordinates Mg(2+). The tract at residues 61-65 is G2; sequence GITIA. A G3 region spans residues 82 to 85; sequence DCPG. Residues 82–86 and 137–140 contribute to the GTP site; these read DCPGH and NKAD. Residues 137 to 140 form a G4 region; it reads NKAD. A G5 region spans residues 175 to 177; sequence SAL.

This sequence belongs to the TRAFAC class translation factor GTPase superfamily. Classic translation factor GTPase family. EF-Tu/EF-1A subfamily. In terms of assembly, monomer.

Its subcellular location is the cytoplasm. It catalyses the reaction GTP + H2O = GDP + phosphate + H(+). GTP hydrolase that promotes the GTP-dependent binding of aminoacyl-tRNA to the A-site of ribosomes during protein biosynthesis. The polypeptide is Elongation factor Tu (Marinobacter nauticus (strain ATCC 700491 / DSM 11845 / VT8) (Marinobacter aquaeolei)).